Consider the following 348-residue polypeptide: Rhodopsin (348 aa).

An N-acetylmethionine modification is found at M1. Over 1 to 36 (MNGTEGPNFYVPFSNVTGVVRSPFEQPQYYLAEPWQ) the chain is Extracellular. N2 and N15 each carry an N-linked (GlcNAc...) asparagine glycan. A helical membrane pass occupies residues 37–61 (FSMLAAYMFLLIVLGFPINFLTLYV). The Cytoplasmic portion of the chain corresponds to 62–73 (TVQHKKLRTPLN). The chain crosses the membrane as a helical span at residues 74-96 (YILLNLAVADLFMVFGGFTTTLY). The Extracellular segment spans residues 97 to 110 (TSLHGYFVFGPTGC). Cysteines 110 and 187 form a disulfide. A helical transmembrane segment spans residues 111–133 (NLEGFFATLGGEIALWSLVVLAI). A 'Ionic lock' involved in activated form stabilization motif is present at residues 134-136 (ERY). Over 134-152 (ERYVVVCKPMSNFRFGENH) the chain is Cytoplasmic. Residues 153–173 (AIMGVVFTWIMALACAAPPLV) form a helical membrane-spanning segment. Residues 174 to 202 (GWSRYIPEGMQCSCGIDYYTLKPEVNNES) lie on the Extracellular side of the membrane. Residue E201 participates in Zn(2+) binding. Residues 203–224 (FVIYMFVVHFTIPMIVIFFCYG) traverse the membrane as a helical segment. Residues 225–252 (QLVFTVKEAAAQQQESATTQKAEKEVTR) are Cytoplasmic-facing. Residues 253–274 (MVIIMVIFFLICWLPYASVAFY) traverse the membrane as a helical segment. Residues 275–286 (IFTHQGSNFGPI) lie on the Extracellular side of the membrane. Q279 serves as a coordination point for Zn(2+). Residues 287–308 (FMTLPAFFAKSSSIYNPVIYIM) form a helical membrane-spanning segment. K296 bears the N6-(retinylidene)lysine mark. Residues 309 to 348 (LNKQFRNCMLTTLCCGKNPLGDDDASATASKTETSQVAPA) are Cytoplasmic-facing. 2 S-palmitoyl cysteine lipidation sites follow: C322 and C323. Residues 330–348 (DDDASATASKTETSQVAPA) are interaction with SAG. S334 bears the Phosphoserine mark. T336 is subject to Phosphothreonine. At S338 the chain carries Phosphoserine. T340 and T342 each carry phosphothreonine. At S343 the chain carries Phosphoserine.

It belongs to the G-protein coupled receptor 1 family. Opsin subfamily. As to quaternary structure, homodimer. May form a complex composed of RHO, GRK1 and RCVRN in a Ca(2+)-dependent manner; RCVRN prevents the interaction between GRK1 and RHO. Interacts with GRK1. Interacts (phosphorylated form) with SAG. Interacts with GNAT1. Interacts with GNAT3. SAG and G-proteins compete for a common binding site. Interacts with PRCD; the interaction promotes PRCD stability. Forms a complex with ASAP1 and ARF4. Forms a complex with ASAP1, RAB11A, Rabin8/RAB3IP, ARF4 and RAB11FIP3; the complex regulates Golgi-to-cilia rhodopsin/RHO transport in photoreceptors. Post-translationally, phosphorylated on some or all of the serine and threonine residues present in the C-terminal region. In terms of processing, contains one covalently linked retinal chromophore. Upon light absorption, the covalently bound 11-cis-retinal is converted to all-trans-retinal. After hydrolysis of the Schiff base and release of the covalently bound all-trans-retinal, active rhodopsin is regenerated by binding of a fresh molecule of 11-cis-retinal. Rod-shaped photoreceptor cells in the retina (at protein level).

The protein resides in the membrane. The protein localises to the cell projection. It is found in the cilium. It localises to the photoreceptor outer segment. In terms of biological role, photoreceptor required for image-forming vision at low light intensity. Required for photoreceptor cell viability after birth. Light-induced isomerization of 11-cis to all-trans retinal triggers a conformational change that activates signaling via G-proteins. Subsequent receptor phosphorylation mediates displacement of the bound G-protein alpha subunit by the arrestin SAG and terminates signaling. This Mus musculus (Mouse) protein is Rhodopsin (Rho).